The chain runs to 440 residues: Histidinol dehydrogenase (440 aa).

NAD(+) contacts are provided by Y139, Q200, and N223. Positions 246, 268, and 271 each coordinate substrate. Zn(2+) is bound by residues Q268 and H271. Residues E336 and H337 each act as proton acceptor in the active site. Substrate is bound by residues H337, D370, E424, and H429. Residue D370 coordinates Zn(2+). Zn(2+) is bound at residue H429.

The protein belongs to the histidinol dehydrogenase family. Zn(2+) serves as cofactor.

It carries out the reaction L-histidinol + 2 NAD(+) + H2O = L-histidine + 2 NADH + 3 H(+). Its pathway is amino-acid biosynthesis; L-histidine biosynthesis; L-histidine from 5-phospho-alpha-D-ribose 1-diphosphate: step 9/9. Its function is as follows. Catalyzes the sequential NAD-dependent oxidations of L-histidinol to L-histidinaldehyde and then to L-histidine. The polypeptide is Histidinol dehydrogenase (Bordetella bronchiseptica (strain ATCC BAA-588 / NCTC 13252 / RB50) (Alcaligenes bronchisepticus)).